We begin with the raw amino-acid sequence, 364 residues long: Methylthioribose-1-phosphate isomerase (364 aa).

Residues 46–48, R89, and Q196 each bind substrate; that span reads RGA. The active-site Proton donor is D237. 247 to 248 provides a ligand contact to substrate; it reads NK.

This sequence belongs to the eIF-2B alpha/beta/delta subunits family. MtnA subfamily.

It catalyses the reaction 5-(methylsulfanyl)-alpha-D-ribose 1-phosphate = 5-(methylsulfanyl)-D-ribulose 1-phosphate. It functions in the pathway amino-acid biosynthesis; L-methionine biosynthesis via salvage pathway; L-methionine from S-methyl-5-thio-alpha-D-ribose 1-phosphate: step 1/6. Functionally, catalyzes the interconversion of methylthioribose-1-phosphate (MTR-1-P) into methylthioribulose-1-phosphate (MTRu-1-P). This Pelotomaculum thermopropionicum (strain DSM 13744 / JCM 10971 / SI) protein is Methylthioribose-1-phosphate isomerase.